A 73-amino-acid polypeptide reads, in one-letter code: uncharacterized protein (73 aa).

This is an uncharacterized protein from Sinorhizobium fredii (strain NBRC 101917 / NGR234).